Reading from the N-terminus, the 257-residue chain is Imidazole glycerol phosphate synthase subunit HisF (257 aa).

Catalysis depends on residues Asp-11 and Asp-130.

Belongs to the HisA/HisF family. As to quaternary structure, heterodimer of HisH and HisF.

The protein resides in the cytoplasm. It carries out the reaction 5-[(5-phospho-1-deoxy-D-ribulos-1-ylimino)methylamino]-1-(5-phospho-beta-D-ribosyl)imidazole-4-carboxamide + L-glutamine = D-erythro-1-(imidazol-4-yl)glycerol 3-phosphate + 5-amino-1-(5-phospho-beta-D-ribosyl)imidazole-4-carboxamide + L-glutamate + H(+). Its pathway is amino-acid biosynthesis; L-histidine biosynthesis; L-histidine from 5-phospho-alpha-D-ribose 1-diphosphate: step 5/9. Its function is as follows. IGPS catalyzes the conversion of PRFAR and glutamine to IGP, AICAR and glutamate. The HisF subunit catalyzes the cyclization activity that produces IGP and AICAR from PRFAR using the ammonia provided by the HisH subunit. This chain is Imidazole glycerol phosphate synthase subunit HisF, found in Mannheimia succiniciproducens (strain KCTC 0769BP / MBEL55E).